The sequence spans 306 residues: Pantothenate kinase (306 aa).

Residue 91–98 (GSVAVGKS) participates in ATP binding.

This sequence belongs to the prokaryotic pantothenate kinase family.

Its subcellular location is the cytoplasm. It catalyses the reaction (R)-pantothenate + ATP = (R)-4'-phosphopantothenate + ADP + H(+). It functions in the pathway cofactor biosynthesis; coenzyme A biosynthesis; CoA from (R)-pantothenate: step 1/5. This is Pantothenate kinase from Streptococcus pneumoniae serotype 19F (strain G54).